Consider the following 421-residue polypeptide: UDP-N-acetylglucosamine 1-carboxyvinyltransferase (421 aa).

22–23 (KN) is a binding site for phosphoenolpyruvate. Position 93 (R93) interacts with UDP-N-acetyl-alpha-D-glucosamine. The active-site Proton donor is the C117. C117 carries the post-translational modification 2-(S-cysteinyl)pyruvic acid O-phosphothioketal. Residues 122–126 (RPVDL), D308, and V330 contribute to the UDP-N-acetyl-alpha-D-glucosamine site.

It belongs to the EPSP synthase family. MurA subfamily.

The protein resides in the cytoplasm. It catalyses the reaction phosphoenolpyruvate + UDP-N-acetyl-alpha-D-glucosamine = UDP-N-acetyl-3-O-(1-carboxyvinyl)-alpha-D-glucosamine + phosphate. The protein operates within cell wall biogenesis; peptidoglycan biosynthesis. Cell wall formation. Adds enolpyruvyl to UDP-N-acetylglucosamine. The sequence is that of UDP-N-acetylglucosamine 1-carboxyvinyltransferase from Ectopseudomonas mendocina (strain ymp) (Pseudomonas mendocina).